A 177-amino-acid chain; its full sequence is Large ribosomal subunit protein uL6 (177 aa).

Belongs to the universal ribosomal protein uL6 family. As to quaternary structure, part of the 50S ribosomal subunit.

Its function is as follows. This protein binds to the 23S rRNA, and is important in its secondary structure. It is located near the subunit interface in the base of the L7/L12 stalk, and near the tRNA binding site of the peptidyltransferase center. The chain is Large ribosomal subunit protein uL6 from Afipia carboxidovorans (strain ATCC 49405 / DSM 1227 / KCTC 32145 / OM5) (Oligotropha carboxidovorans).